The chain runs to 422 residues: UDP-N-acetylglucosamine 1-carboxyvinyltransferase 2 (422 aa).

Residue 22–23 (KN) participates in phosphoenolpyruvate binding. R93 is a UDP-N-acetyl-alpha-D-glucosamine binding site. C117 functions as the Proton donor in the catalytic mechanism. The residue at position 117 (C117) is a 2-(S-cysteinyl)pyruvic acid O-phosphothioketal. UDP-N-acetyl-alpha-D-glucosamine is bound by residues 122–126 (RPVDL), D308, and I330.

This sequence belongs to the EPSP synthase family. MurA subfamily.

The protein localises to the cytoplasm. The enzyme catalyses phosphoenolpyruvate + UDP-N-acetyl-alpha-D-glucosamine = UDP-N-acetyl-3-O-(1-carboxyvinyl)-alpha-D-glucosamine + phosphate. The protein operates within cell wall biogenesis; peptidoglycan biosynthesis. Functionally, cell wall formation. Adds enolpyruvyl to UDP-N-acetylglucosamine. The sequence is that of UDP-N-acetylglucosamine 1-carboxyvinyltransferase 2 from Legionella pneumophila (strain Lens).